The sequence spans 323 residues: Zinc finger C2HC domain-containing protein 1A (323 aa).

The C2HC/C3H-type 1 zinc-finger motif lies at 14–43; it reads ELLPCKICGRTFFPVALKKHGPICQKTATK. Cys18, Cys21, His33, and Cys37 together coordinate Zn(2+). The interval 42-81 is disordered; it reads TKKRKTFDSSRQRAEGTDIPTVKPLKPRPEPPKKPSNWRR. The span at 47–57 shows a compositional bias: basic and acidic residues; that stretch reads TFDSSRQRAEG. A C2HC/C3H-type 2 zinc finger spans residues 117–146; sequence DYIQCPYCQRRFNENAADRHINFCKEQAAR. The Zn(2+) site is built by Cys121, Cys124, His136, and Cys140. The disordered stretch occupies residues 149–258; the sequence is NKGKFSTDTK…NPASGVLTSK (110 aa). Residues 177–197 are compositionally biased toward polar residues; sequence SPGTTSSGSSRLPQPSGTSKT. Low complexity predominate over residues 198–214; it reads VVGAPSGKVSSVSSSSG. At Ser221 the chain carries Phosphoserine. Residue Thr242 is modified to Phosphothreonine. Ser290 carries the post-translational modification Phosphoserine.

This sequence belongs to the ZC2HC1 family. It depends on Zn(2+) as a cofactor.

The sequence is that of Zinc finger C2HC domain-containing protein 1A (ZC2HC1A) from Bos taurus (Bovine).